The chain runs to 119 residues: uncharacterized protein (119 aa).

The N-terminal stretch at 1-18 (MPAVFMLASSSALQCGRG) is a signal peptide. Residues 23–100 (PRTEVGAGHS…MFPGPLRGPA (78 aa)) are disordered. Residues 43–71 (GNQTSVIPATSRQAALGTSWTQRRTQPLQ) are compositionally biased toward polar residues. A glycan (N-linked (GlcNAc...) asparagine) is linked at Asn44.

Its subcellular location is the secreted. This is an uncharacterized protein from Homo sapiens (Human).